The chain runs to 169 residues: MKTYRRQIREKILQALYTVELRGITLDEAAGWLLTEEILADPNAMKFFNLLLSSIKAHREEIDNYIAQQTFNWDMSRIAIIDKNIIRMALTEILYCEDIPPKVSINEAIEIAKKFNSTDKSSKFVNGILDAIFNKLKTEGKVHKNGRGLIDQSFSRPQKPESEATEIEE.

The tract at residues 147 to 169 (RGLIDQSFSRPQKPESEATEIEE) is disordered.

This sequence belongs to the NusB family.

Involved in transcription antitermination. Required for transcription of ribosomal RNA (rRNA) genes. Binds specifically to the boxA antiterminator sequence of the ribosomal RNA (rrn) operons. This Chlorobium chlorochromatii (strain CaD3) protein is Transcription antitermination protein NusB.